Consider the following 456-residue polypeptide: PTS system sucrose-specific EIIBC component (456 aa).

The 84-residue stretch at 4 to 87 (EQISCSLLPL…TQAAGISESS (84 aa)) folds into the PTS EIIB type-1 domain. Cys-26 functions as the Phosphocysteine intermediate; for EIIB activity in the catalytic mechanism. In terms of domain architecture, PTS EIIC type-1 spans 107 to 456 (RLLSNIFVPI…LVLKYKTDAE (350 aa)). Helical transmembrane passes span 112-132 (IFVP…LLGM), 144-164 (AIYI…PILI), 181-201 (TLGG…AAGF), 213-233 (MIGY…MSIV), 247-267 (LILT…LIIG), 288-308 (AGWL…ITGI), 329-349 (FLLP…LAVW), 360-380 (ITLP…IFGI), 388-408 (FIAA…VHVY), and 428-448 (LLNY…VSLV).

Its subcellular location is the cell inner membrane. It carries out the reaction N(pros)-phospho-L-histidyl-[protein](out) + sucrose = sucrose 6(G)-phosphate(in) + L-histidyl-[protein]. The phosphoenolpyruvate-dependent sugar phosphotransferase system (sugar PTS), a major carbohydrate active transport system, catalyzes the phosphorylation of incoming sugar substrates concomitantly with their translocation across the cell membrane. This system is involved in sucrose transport. This chain is PTS system sucrose-specific EIIBC component, found in Salmonella typhimurium.